A 712-amino-acid polypeptide reads, in one-letter code: Frizzled-6 (712 aa).

An N-terminal signal peptide occupies residues 1 to 18 (MEMFTFLLTCVFLPFVRG). Residues 19–132 (HSLFTCEPIT…CDRLQYCDET (114 aa)) form the FZ domain. Residues 19–201 (HSLFTCEPIT…SDELEFAKSF (183 aa)) lie on the Extracellular side of the membrane. 5 disulfide bridges follow: C24-C85, C32-C78, C69-C106, C95-C129, and C99-C123. An N-linked (GlcNAc...) asparagine glycan is attached at N38. The helical transmembrane segment at 202 to 222 (IGIVSIFCLCATLFTFLTFLI) threads the bilayer. At 223-233 (DVKRFRYPERP) the chain is on the cytoplasmic side. A helical membrane pass occupies residues 234-254 (IIYYSVCYSIVSLMYFIGFLL). The Extracellular portion of the chain corresponds to 255–284 (GDRTACNKADEKLELGDTVVLGSQNKACTV). A helical membrane pass occupies residues 285–305 (LFMFLYFFTMAGTVWWVILTI). Residues 306–324 (TWFLAAGRKWSCEAIEQKA) lie on the Cytoplasmic side of the membrane. The chain crosses the membrane as a helical span at residues 325–345 (VWFHAVAWGIPGFLTVMLLAM). At 346–370 (NKVEGDNISGVCFVGLYDLDASRYF) the chain is on the extracellular side. N352 carries an N-linked (GlcNAc...) asparagine glycan. Residues 371–391 (VLLPLCLCVFVGLSLLLAGII) form a helical membrane-spanning segment. The Cytoplasmic portion of the chain corresponds to 392–416 (SLNHVRQVIQHDGRNQEKLKKFMIR). A helical membrane pass occupies residues 417 to 437 (IGVFSGLYLVPLVTLLGCYVY). Residues 438 to 473 (EQVNRITWEITWVSDHCRQYHIPCPYQAKTETRPEL) lie on the Extracellular side of the membrane. Residues 474–494 (ALFMIKYLMTLIVGISAVFWV) form a helical membrane-spanning segment. The Cytoplasmic portion of the chain corresponds to 495-712 (GSKKTCTEWA…EHGTGSHSDT (218 aa)). Residues 498–503 (KTCTEW) carry the Lys-Thr-X-X-X-Trp motif, mediates interaction with the PDZ domain of Dvl family members motif. A disordered region spans residues 588-712 (EIQTSPETSV…EHGTGSHSDT (125 aa)). Basic and acidic residues-rich tracts occupy residues 628–637 (LCEEQADRKG) and 652–664 (TRSEGRVTPKSDV). Polar residues predominate over residues 668 to 693 (GPMQSSSLQVPGSSEPGSLKGSTSLL). Residues 700-712 (GRKEHGTGSHSDT) show a composition bias toward basic and acidic residues.

It belongs to the G-protein coupled receptor Fz/Smo family. In terms of assembly, interacts with LMBR1L. Post-translationally, ubiquitinated by ZNRF3, leading to its degradation by the proteasome.

Its subcellular location is the membrane. The protein resides in the cell membrane. The protein localises to the cell surface. It localises to the apical cell membrane. It is found in the cytoplasmic vesicle membrane. Its subcellular location is the endoplasmic reticulum membrane. In terms of biological role, receptor for Wnt proteins. Most of frizzled receptors are coupled to the beta-catenin canonical signaling pathway, which leads to the activation of disheveled proteins, inhibition of GSK-3 kinase, nuclear accumulation of beta-catenin and activation of Wnt target genes. A second signaling pathway involving PKC and calcium fluxes has been seen for some family members, but it is not yet clear if it represents a distinct pathway or if it can be integrated in the canonical pathway, as PKC seems to be required for Wnt-mediated inactivation of GSK-3 kinase. Both pathways seem to involve interactions with G-proteins. Activation by Wnt5A stimulates PKC activity via a G-protein-dependent mechanism. Involved in transduction and intercellular transmission of polarity information during tissue morphogenesis and/or in differentiated tissues. Together with FZD3, is involved in the neural tube closure and plays a role in the regulation of the establishment of planar cell polarity (PCP), particularly in the orientation of asymmetric bundles of stereocilia on the apical faces of a subset of auditory and vestibular sensory cells located in the inner ear. The polypeptide is Frizzled-6 (FZD6) (Canis lupus familiaris (Dog)).